Here is a 306-residue protein sequence, read N- to C-terminus: Aspartate carbamoyltransferase catalytic subunit (306 aa).

Carbamoyl phosphate is bound by residues Arg55 and Thr56. Lys85 is a binding site for L-aspartate. 3 residues coordinate carbamoyl phosphate: Arg106, His133, and Gln136. L-aspartate-binding residues include Arg166 and Arg228. Carbamoyl phosphate is bound by residues Leu264 and Pro265.

It belongs to the aspartate/ornithine carbamoyltransferase superfamily. ATCase family. Heterododecamer (2C3:3R2) of six catalytic PyrB chains organized as two trimers (C3), and six regulatory PyrI chains organized as three dimers (R2).

It carries out the reaction carbamoyl phosphate + L-aspartate = N-carbamoyl-L-aspartate + phosphate + H(+). The protein operates within pyrimidine metabolism; UMP biosynthesis via de novo pathway; (S)-dihydroorotate from bicarbonate: step 2/3. Catalyzes the condensation of carbamoyl phosphate and aspartate to form carbamoyl aspartate and inorganic phosphate, the committed step in the de novo pyrimidine nucleotide biosynthesis pathway. The protein is Aspartate carbamoyltransferase catalytic subunit of Serratia marcescens.